The chain runs to 303 residues: Probable RuBisCO transcriptional regulator (303 aa).

The 58-residue stretch at 6-63 (FTLDQLRIFQAIVVEGSFQKAAQSLYISQPAVSLQIQNLEQQLNAPLFDRSHRKAKLT) folds into the HTH lysR-type domain. The H-T-H motif DNA-binding region spans 23–42 (FQKAAQSLYISQPAVSLQIQ).

The protein belongs to the LysR transcriptional regulatory family.

It is found in the plastid. It localises to the chloroplast. In terms of biological role, trans-acting transcriptional regulator of RuBisCO genes (rbcL and rbcS) expression. The chain is Probable RuBisCO transcriptional regulator (rbcR) from Cyanidioschyzon merolae (strain NIES-3377 / 10D) (Unicellular red alga).